We begin with the raw amino-acid sequence, 81 residues long: Large ribosomal subunit protein bL31 (81 aa).

C16, C18, C38, and C41 together coordinate Zn(2+).

Belongs to the bacterial ribosomal protein bL31 family. Type A subfamily. As to quaternary structure, part of the 50S ribosomal subunit. Zn(2+) is required as a cofactor.

Functionally, binds the 23S rRNA. This Mycobacterium sp. (strain JLS) protein is Large ribosomal subunit protein bL31.